We begin with the raw amino-acid sequence, 401 residues long: Ribosomal protein uS12 methylthiotransferase RimO (401 aa).

The MTTase N-terminal domain occupies 1 to 108 (MKINFINLGC…GIELLQTPKR (108 aa)). [4Fe-4S] cluster is bound by residues Cys10, Cys43, Cys72, Cys124, Cys128, and Cys131. In terms of domain architecture, Radical SAM core spans 110 to 339 (LTTKHYAYLK…FNLSQEILEE (230 aa)).

It belongs to the methylthiotransferase family. RimO subfamily. [4Fe-4S] cluster serves as cofactor.

It is found in the cytoplasm. The enzyme catalyses L-aspartate(89)-[ribosomal protein uS12]-hydrogen + (sulfur carrier)-SH + AH2 + 2 S-adenosyl-L-methionine = 3-methylsulfanyl-L-aspartate(89)-[ribosomal protein uS12]-hydrogen + (sulfur carrier)-H + 5'-deoxyadenosine + L-methionine + A + S-adenosyl-L-homocysteine + 2 H(+). In terms of biological role, catalyzes the methylthiolation of an aspartic acid residue of ribosomal protein uS12. The sequence is that of Ribosomal protein uS12 methylthiotransferase RimO from Hydrogenobaculum sp. (strain Y04AAS1).